A 146-amino-acid polypeptide reads, in one-letter code: Phospholipase A2 OS2 (146 aa).

The first 27 residues, methionine 1 to leucine 27, serve as a signal peptide directing secretion. Intrachain disulfides connect cysteine 38–cysteine 99, cysteine 54–cysteine 145, cysteine 56–cysteine 72, cysteine 71–cysteine 126, cysteine 78–cysteine 119, cysteine 88–cysteine 112, and cysteine 106–cysteine 117. Ca(2+)-binding residues include tyrosine 55, glycine 57, and glycine 59. Histidine 75 is a catalytic residue. Aspartate 76 contacts Ca(2+). Aspartate 120 is an active-site residue.

Belongs to the phospholipase A2 family. Group I subfamily. D49 sub-subfamily. As to quaternary structure, monomer. Ca(2+) is required as a cofactor. As to expression, expressed by the venom gland.

It is found in the secreted. The enzyme catalyses a 1,2-diacyl-sn-glycero-3-phosphocholine + H2O = a 1-acyl-sn-glycero-3-phosphocholine + a fatty acid + H(+). Snake venom phospholipase A2 (PLA2) that shows high presynaptic neurotoxicity in vertebrata that is independent of catalytic activity, as well as local myotoxicity when intramuscularly injected into mice. Blocks acetylcholine release in Aplysia neurons, and potentiates pro-inflammatory cellular signaling. Potentiates glutamate excitoxicity when coinjected into brain of rats. May act by binding in a calcium-dependent fashion and with high affinity to a neuronal-type (N-type) PLA2 receptor, and with very high affinity to a muscle-type (M-type) PLA2 receptor. In vitro, shows a high-specific activity on E.coli membranes and is more efficient on the anionic phospholipid POPG than on the anionic phospholipid POPS or the zwitterionic phospholipid POPC. Exerts catalytically-independent anti-HIV (IC(50) is 35 nM) activity and catalytically-dependent antimalarial activity (IC(50) is 3.1 nM when tested on P.falciparum grown in serum that contains lipoproteins). PLA2 catalyzes the calcium-dependent hydrolysis of the 2-acyl groups in 3-sn-phosphoglycerides. This Oxyuranus scutellatus scutellatus (Australian taipan) protein is Phospholipase A2 OS2.